Consider the following 1118-residue polypeptide: MKKANRSAGSVPKVSGISKPQTVEKSKPENSSSAPTGVKPVRPGAAAALSKTKSNDDLLAGMAGGVNVTNGIKAKKSTCSSAAPSAPAPAMTISENKSKISTGTSSSAKRSTSAGNKESSSTRERLRERTRLNQSKKLPSVSQGANDVALAKRSRSRTAAEGDIRMSKSKSDNQISDKAALEAKVKDLLTLAKTKDVEILHLRNELRDMRAQLGISEDHCEGEDRSEVKETIIAHQPTDVESTLLQLQEQNTAIREELNQLKNENRMLKDRLNALGFSLEQRLDNSEKLFGYQSLSPEITPGNQSDGGGTLTSSVEGSAPGSVEDLLSQDENTLMDHQHSNSMDNLDSECSEVYQPLTSSDDALDAPSSSESEGVPSIERSRKGSSGNASEVSVACLTERIHQMEENQHSTSEELQATLQELADLQQITQELNSENERLGEEKVILMESLCQQSDKLEHFGRQIEYFRSLLDEHHISYVIDEDVKSGRYMELEQRYMDLAENARFEREQLLGVQQHLSNTLKMAEQDNKEAQEMIGALKERSHHMERIIESEQKGKAALAATLEEYKATVASDQIEMNRLKAQLENEKQKVAELYSIHNSGDKSDIQDLLESVRLDKEKAETLASSLQEDLAHTRNDANRLQDTIAKVEDEYRAFQEEAKKQIEDLNMTLEKLRSELEEKDTERSDMKETIFELEDEVEQHRAVKLHDNLIISDLENTVKKLQDQKHDMEREIKTLHRRLREESAEWRQFQADLQTAVVIANDIKSEAQEEIGDLKRRLHEAQEKNEKLTKELEEIKSRKQEEERGRVYNYMNAVERDLAALRQGMGLSRRSSTSSEPTPTVKTLIKSFDSASQVPNAAAAAIPRTPLSPSPMKTPPAAAVSPMQRHSISGPISTSKPLTALSDKRSNYGELPVQEHLLRTSSTSRPASLPRVPAMESAKTISVSRRSSEEMKRDISASEGASPASLMAMGTTSPQLSLSSSPTASVTPSTRSRIREERKDPLSALAREYGGSKRNALLKWCQKKTEGYQNIDITNFSSSWNDGLAFCALLHTYLPAHIPYQELNSQDKKRNFTLAFQAAESVGIKSTLDINEMARTERPDWQNVMLYVTAIYKYFET.

4 disordered regions span residues 1 to 63 (MKKA…AGMA), 75 to 176 (KKST…NQIS), 294 to 324 (SLSP…GSVE), and 359 to 391 (SSDD…NASE). Residues 80 to 90 (SSAAPSAPAPA) show a composition bias toward low complexity. Polar residues predominate over residues 93 to 117 (ISENKSKISTGTSSSAKRSTSAGNK). The span at 120-131 (SSTRERLRERTR) shows a compositional bias: basic and acidic residues. Residues 133-145 (NQSKKLPSVSQGA) show a composition bias toward polar residues. The segment covering 158 to 171 (TAAEGDIRMSKSKS) has biased composition (basic and acidic residues). Residues 168–281 (KSKSDNQISD…LNALGFSLEQ (114 aa)) are a coiled coil. The span at 294 to 304 (SLSPEITPGNQ) shows a compositional bias: polar residues. Positions 359-373 (SSDDALDAPSSSESE) are enriched in low complexity. Phosphoserine is present on residues Ser385, Ser386, and Ser390. 2 coiled-coil regions span residues 395-450 (ACLT…MESL) and 488-808 (RYME…RGRV). 3 positions are modified to phosphoserine: Ser869, Ser882, and Ser888. The interval 921–999 (TSSTSRPASL…STRSRIREER (79 aa)) is disordered. Over residues 947 to 957 (RSSEEMKRDIS) the composition is skewed to basic and acidic residues. Residues 972–992 (TTSPQLSLSSSPTASVTPSTR) show a composition bias toward low complexity. A Calponin-homology (CH) domain is found at 1012 to 1117 (GSKRNALLKW…YVTAIYKYFE (106 aa)).

This sequence belongs to the cytospin-A family. May interact with both microtubules and actin cytoskeleton.

Its subcellular location is the cytoplasm. The protein resides in the cytoskeleton. It localises to the spindle. It is found in the cell junction. The protein localises to the gap junction. In terms of biological role, involved in cytokinesis and spindle organization. May play a role in actin cytoskeleton organization and microtubule stabilization and hence required for proper cell adhesion and migration. The chain is Cytospin-A (Specc1l) from Mus musculus (Mouse).